A 432-amino-acid chain; its full sequence is MDDAVGDLKQALPCVAESPAVHVEVLQRSGSTAKKEDIKQSVYRLLKRHNIVFGDYVWTEFDEPFLTRNVQSVSIVDTELKAKDPQPIDLSACTIALHIFQLNEEGPSSENLDEETENIIAASHWVLPAAEFHGLWDSLVYDVEVKSHLLDYVMTTLLFSDKNVDSNLITWNRVVLLHGPPGTGKTSLCKALAQKLTIRLSSRYRYGQLIEINSHSLFSKWFSESGKLVTKMFQKIQDLIDDKEALVFVLIDEVESLTAARNACRAGAEPSDAIRVVNAVLTQIDQIKRHSNVVILTTSNITEKIDVAFVDRADIKQYIGPPSAAAIFKIYLSCLEELMKCQIIYPRQQLLTLRELEMIGFIENNVSKLSLLLSEISRKSEGLSGRVLRKLPFLAHALYIQAPSVTIEGFLQALSLAVDKQFEEKKKLSAHV.

At Met-1 the chain carries N-acetylmethionine. Residue 179–186 coordinates ATP; it reads GPPGTGKT.

The protein belongs to the AAA ATPase family. PCH2 subfamily. In terms of assembly, specifically interacts with the ligand binding domain of the thyroid receptor (TR). This interaction does not require the presence of thyroid hormone for its interaction. Interacts with proteasome subunit PSMA8; to participate in meiosis progression during spermatogenesis.

Plays a key role in chromosome recombination and chromosome structure development during meiosis. Required at early steps in meiotic recombination that leads to non-crossovers pathways. Also needed for efficient completion of homologous synapsis by influencing crossover distribution along the chromosomes affecting both crossovers and non-crossovers pathways. Also required for development of higher-order chromosome structures and is needed for synaptonemal-complex formation. In males, required for efficient synapsis of the sex chromosomes and for sex body formation. Promotes early steps of the DNA double-strand breaks (DSBs) repair process upstream of the assembly of RAD51 complexes. Required for depletion of HORMAD1 and HORMAD2 from synapsed chromosomes. Plays a role in mitotic spindle assembly checkpoint (SAC) activation. This chain is Pachytene checkpoint protein 2 homolog (Trip13), found in Rattus norvegicus (Rat).